A 191-amino-acid polypeptide reads, in one-letter code: Dephospho-CoA kinase (191 aa).

Residues 3–191 (AIGITGSYAS…KLIKNLECQV (189 aa)) form the DPCK domain. 11 to 16 (ASGKTF) contributes to the ATP binding site.

This sequence belongs to the CoaE family.

The protein localises to the cytoplasm. The enzyme catalyses 3'-dephospho-CoA + ATP = ADP + CoA + H(+). It participates in cofactor biosynthesis; coenzyme A biosynthesis; CoA from (R)-pantothenate: step 5/5. Its function is as follows. Catalyzes the phosphorylation of the 3'-hydroxyl group of dephosphocoenzyme A to form coenzyme A. In Rickettsia typhi (strain ATCC VR-144 / Wilmington), this protein is Dephospho-CoA kinase.